The following is a 298-amino-acid chain: tRNA-cytidine(32) 2-sulfurtransferase (298 aa).

A PP-loop motif motif is present at residues 48–53; it reads SGGKDS. [4Fe-4S] cluster-binding residues include Cys-123, Cys-126, and Cys-214.

This sequence belongs to the TtcA family. As to quaternary structure, homodimer. Mg(2+) is required as a cofactor. [4Fe-4S] cluster serves as cofactor.

Its subcellular location is the cytoplasm. The catalysed reaction is cytidine(32) in tRNA + S-sulfanyl-L-cysteinyl-[cysteine desulfurase] + AH2 + ATP = 2-thiocytidine(32) in tRNA + L-cysteinyl-[cysteine desulfurase] + A + AMP + diphosphate + H(+). It functions in the pathway tRNA modification. Catalyzes the ATP-dependent 2-thiolation of cytidine in position 32 of tRNA, to form 2-thiocytidine (s(2)C32). The sulfur atoms are provided by the cysteine/cysteine desulfurase (IscS) system. The sequence is that of tRNA-cytidine(32) 2-sulfurtransferase from Nitrosospira multiformis (strain ATCC 25196 / NCIMB 11849 / C 71).